The sequence spans 288 residues: Homoserine kinase (288 aa).

ATP is bound at residue Pro-79–Ala-89.

It belongs to the GHMP kinase family. Homoserine kinase subfamily.

The protein localises to the cytoplasm. The enzyme catalyses L-homoserine + ATP = O-phospho-L-homoserine + ADP + H(+). Its pathway is amino-acid biosynthesis; L-threonine biosynthesis; L-threonine from L-aspartate: step 4/5. Functionally, catalyzes the ATP-dependent phosphorylation of L-homoserine to L-homoserine phosphate. This is Homoserine kinase from Listeria innocua serovar 6a (strain ATCC BAA-680 / CLIP 11262).